The primary structure comprises 146 residues: uncharacterized protein (146 aa).

5 consecutive transmembrane segments (helical) span residues 5–27 (GAMV…YGLA), 32–49 (FVYV…YIIL), 61–80 (LAVM…FFSG), 90–108 (SLGL…ARVF), and 120–142 (FFLK…MLFL).

Its subcellular location is the cell membrane. This is an uncharacterized protein from Archaeoglobus fulgidus (strain ATCC 49558 / DSM 4304 / JCM 9628 / NBRC 100126 / VC-16).